The chain runs to 423 residues: Citrate synthase-like protein clz17 (423 aa).

Residues H357 and D413 contribute to the active site.

Belongs to the citrate synthase family.

Its pathway is secondary metabolite biosynthesis. Functionally, citrate synthase-like protein; part of the gene cluster that mediates the biosynthesis of squalestatin S1 (SQS1, also known as zaragozic acid A), a heavily oxidized fungal polyketide that offers potent cholesterol lowering activity by targeting squalene synthase (SS). SQS1 is composed of a 2,8-dioxobicyclic[3.2.1]octane-3,4,5-tricarboxyclic acid core that is connected to two lipophilic polyketide arms. These initial steps feature the priming of an unusual benzoic acid starter unit onto the highly reducing polyketide synthase clz14, followed by oxaloacetate extension and product release to generate a tricarboxylic acid containing product. The phenylalanine ammonia lyase (PAL) clz10 and the acyl-CoA ligase clz12 are involved in transforming phenylalanine into benzoyl-CoA. The citrate synthase-like protein clz17 is involved in connecting the C-alpha-carbons of the hexaketide chain and oxaloacetate to afford the tricarboxylic acid unit. The potential hydrolytic enzymes, clz11 and clz13, are in close proximity to pks2 and may participate in product release. On the other side, the tetraketide arm is synthesized by a the squalestatin tetraketide synthase clz2 and enzymatically esterified to the core in the last biosynthetic step, by the acetyltransferase clz6. The biosynthesis of the tetraketide must involve 3 rounds of chain extension. After the first and second rounds methyl-transfer occurs, and in all rounds of extension the ketoreductase and dehydratase are active. The enoyl reductase and C-MeT of clz2 are not active in the final round of extension. The acetyltransferase clz6 appears to have a broad substrate selectivity for its acyl CoA substrate, allowing the in vitro synthesis of novel squalestatins. The biosynthesis of SQS1 requires several oxidative steps likely performed by oxidoreductases clz3, clz15 and clz16. Finally, in support of the identification of the cluster as being responsible for SQS1 production, the cluster contains a gene encoding a putative squalene synthase (SS) clz20, suggesting a likely mechanism for self-resistance. The chain is Citrate synthase-like protein clz17 from Cochliobolus lunatus (Filamentous fungus).